Here is a 119-residue protein sequence, read N- to C-terminus: Large ribosomal subunit protein uL18 (119 aa).

It belongs to the universal ribosomal protein uL18 family. As to quaternary structure, part of the 50S ribosomal subunit; part of the 5S rRNA/L5/L18/L25 subcomplex. Contacts the 5S and 23S rRNAs.

Functionally, this is one of the proteins that bind and probably mediate the attachment of the 5S RNA into the large ribosomal subunit, where it forms part of the central protuberance. This Staphylococcus aureus (strain bovine RF122 / ET3-1) protein is Large ribosomal subunit protein uL18.